A 78-amino-acid polypeptide reads, in one-letter code: Hainantoxin-XX.3 (78 aa).

Residues 1–23 (MKSATLLALSFLLIASCFLICEA) form the signal peptide. The propeptide occupies 24-47 (EHSRYEEHEILEENMGDVVNLEQR). Cystine bridges form between cysteine 49–cysteine 62, cysteine 56–cysteine 66, and cysteine 61–cysteine 77.

It belongs to the hainantoxin family. 20 subfamily. As to expression, expressed by the venom gland.

It is found in the secreted. Its function is as follows. Putative ion channel inhibitor. In Cyriopagopus hainanus (Chinese bird spider), this protein is Hainantoxin-XX.3.